Consider the following 435-residue polypeptide: Cytochrome c biogenesis protein Ccs1 (435 aa).

The next 3 membrane-spanning stretches (helical) occupy residues 17-37 (LSLSISLLLLIASISIIGTII), 77-97 (NPCFVLVLVLFFCSLLACTFS), and 163-183 (IAPIVVHFSIILTFIGSLISL).

Belongs to the Ccs1/CcsB family. In terms of assembly, may interact with CcsA.

It is found in the plastid. It localises to the chloroplast thylakoid membrane. Functionally, required during biogenesis of c-type cytochromes (cytochrome c6 and cytochrome f) at the step of heme attachment. The protein is Cytochrome c biogenesis protein Ccs1 of Gracilaria tenuistipitata var. liui (Red alga).